The sequence spans 67 residues: ATP synthase subunit c (67 aa).

2 consecutive transmembrane segments (helical) span residues 6-26 (ILAL…LVAN) and 46-66 (IMGV…TFFV).

The protein belongs to the ATPase C chain family. F-type ATPases have 2 components, F(1) - the catalytic core - and F(0) - the membrane proton channel. F(1) has five subunits: alpha(3), beta(3), gamma(1), delta(1), epsilon(1). F(0) has three main subunits: a(1), b(2) and c(10-14). The alpha and beta chains form an alternating ring which encloses part of the gamma chain. F(1) is attached to F(0) by a central stalk formed by the gamma and epsilon chains, while a peripheral stalk is formed by the delta and b chains.

The protein resides in the cell membrane. In terms of biological role, f(1)F(0) ATP synthase produces ATP from ADP in the presence of a proton or sodium gradient. F-type ATPases consist of two structural domains, F(1) containing the extramembraneous catalytic core and F(0) containing the membrane proton channel, linked together by a central stalk and a peripheral stalk. During catalysis, ATP synthesis in the catalytic domain of F(1) is coupled via a rotary mechanism of the central stalk subunits to proton translocation. Its function is as follows. Key component of the F(0) channel; it plays a direct role in translocation across the membrane. A homomeric c-ring of between 10-14 subunits forms the central stalk rotor element with the F(1) delta and epsilon subunits. The chain is ATP synthase subunit c from Streptococcus mutans serotype c (strain ATCC 700610 / UA159).